The following is a 742-amino-acid chain: UPF0313 protein MA_4618 (742 aa).

The interval 1-125 (MGVRKQTMVK…SFSSSLPASK (125 aa)) is disordered. Residues 1-128 (MGVRKQTMVK…SSLPASKFLP (128 aa)) are unknown. Basic and acidic residues-rich tracts occupy residues 17–40 (ENKK…ERAG) and 49–73 (KKVE…KAEG). The span at 106-115 (TGKKEKKQKK) shows a compositional bias: basic residues. Residues 129 to 742 (MSPEEVKARG…KCLIRRKEKQ (614 aa)) form a UPF0313 region. In terms of domain architecture, Radical SAM core spans 438 to 707 (ALEMVKFSLT…AMQRALMHYR (270 aa)). [4Fe-4S] cluster-binding residues include cysteine 452, cysteine 456, and cysteine 459.

In the C-terminal section; belongs to the UPF0313 family. The cofactor is [4Fe-4S] cluster.

The chain is UPF0313 protein MA_4618 from Methanosarcina acetivorans (strain ATCC 35395 / DSM 2834 / JCM 12185 / C2A).